The chain runs to 1889 residues: Treslin (1889 aa).

Ser295, Ser599, Ser820, Ser861, Ser919, Ser934, Ser1002, Ser1027, and Ser1078 each carry phosphoserine. Residues Asp812 to Ser832 show a composition bias toward low complexity. The disordered stretch occupies residues Asp812–Glu836. A disordered region spans residues Arg979 to Gln1063. Residues Leu1020–Glu1050 show a composition bias toward polar residues. Disordered stretches follow at residues Glu1098–Ser1421, Leu1471–Glu1508, Gly1520–Thr1543, Ser1630–Gln1714, Val1730–Trp1751, and Gln1841–Arg1875. Residues Thr1127–Val1179 are compositionally biased toward polar residues. The residue at position 1134 (Thr1134) is a Phosphothreonine. Ser1141 bears the Phosphoserine mark. The span at Ser1187–Pro1197 shows a compositional bias: low complexity. Polar residues predominate over residues Gln1203–Ser1219. The segment covering Thr1339–Val1351 has biased composition (low complexity). Residues Lys1373–Ser1382 are compositionally biased toward basic residues. Ser1406 bears the Phosphoserine mark. A compositionally biased stretch (low complexity) spans Leu1496 to Glu1508. Composition is skewed to polar residues over residues Asp1525–Thr1543 and Trp1652–Thr1662. A compositionally biased stretch (basic and acidic residues) spans Pro1705–Gln1714.

The protein belongs to the treslin family. In terms of assembly, interacts with TOPBP1 (via BRCT domains); interaction takes place in a CDK2-dependent manner. Component of the replisome complex composed of at least DONSON, MCM2, MCM7, PCNA and TICRR.

Its subcellular location is the nucleus. Functionally, regulator of DNA replication and S/M and G2/M checkpoints. Regulates the triggering of DNA replication initiation via its interaction with TOPBP1 by participating in CDK2-mediated loading of CDC45L onto replication origins. Required for the transition from pre-replication complex (pre-RC) to pre-initiation complex (pre-IC). Required to prevent mitotic entry after treatment with ionizing radiation. The chain is Treslin (Ticrr) from Mus musculus (Mouse).